Here is a 454-residue protein sequence, read N- to C-terminus: tRNA modification GTPase MnmE (454 aa).

3 residues coordinate (6S)-5-formyl-5,6,7,8-tetrahydrofolate: Arg23, Glu80, and Lys120. A TrmE-type G domain is found at Gly216–Gly377. Residue Asn226 coordinates K(+). Residues Asn226–Ser231, Thr245–Thr251, Asp270–Gly273, Asn335–Asp338, and Ser358–Arg360 each bind GTP. A Mg(2+)-binding site is contributed by Ser230. Residues Thr245, Ile247, and Thr250 each coordinate K(+). A Mg(2+)-binding site is contributed by Thr251. Residue Lys454 participates in (6S)-5-formyl-5,6,7,8-tetrahydrofolate binding.

The protein belongs to the TRAFAC class TrmE-Era-EngA-EngB-Septin-like GTPase superfamily. TrmE GTPase family. In terms of assembly, homodimer. Heterotetramer of two MnmE and two MnmG subunits. Requires K(+) as cofactor.

The protein localises to the cytoplasm. Functionally, exhibits a very high intrinsic GTPase hydrolysis rate. Involved in the addition of a carboxymethylaminomethyl (cmnm) group at the wobble position (U34) of certain tRNAs, forming tRNA-cmnm(5)s(2)U34. This is tRNA modification GTPase MnmE from Enterobacter sp. (strain 638).